The following is a 1055-amino-acid chain: DNA-directed RNA polymerase subunit beta' (1055 aa).

The Zn(2+) site is built by Cys60, Cys62, Cys75, and Cys78. Residues Asp449, Asp451, and Asp453 each coordinate Mg(2+). Residues Cys818, Cys892, Cys899, and Cys902 each coordinate Zn(2+).

This sequence belongs to the RNA polymerase beta' chain family. As to quaternary structure, the RNAP catalytic core consists of 2 alpha, 1 beta, 1 beta' and 1 omega subunit. When a sigma factor is associated with the core the holoenzyme is formed, which can initiate transcription. Mg(2+) is required as a cofactor. It depends on Zn(2+) as a cofactor.

It carries out the reaction RNA(n) + a ribonucleoside 5'-triphosphate = RNA(n+1) + diphosphate. Its function is as follows. DNA-dependent RNA polymerase catalyzes the transcription of DNA into RNA using the four ribonucleoside triphosphates as substrates. The polypeptide is DNA-directed RNA polymerase subunit beta' (Pediococcus acidilactici).